A 166-amino-acid polypeptide reads, in one-letter code: 6,7-dimethyl-8-ribityllumazine synthase (166 aa).

5-amino-6-(D-ribitylamino)uracil is bound by residues phenylalanine 24, 58 to 60, and 82 to 84; these read ALE and AVI. Residue 87–88 coordinates (2S)-2-hydroxy-3-oxobutyl phosphate; sequence ET. Catalysis depends on histidine 90, which acts as the Proton donor. Asparagine 115 is a binding site for 5-amino-6-(D-ribitylamino)uracil. A (2S)-2-hydroxy-3-oxobutyl phosphate-binding site is contributed by arginine 129.

Belongs to the DMRL synthase family.

It catalyses the reaction (2S)-2-hydroxy-3-oxobutyl phosphate + 5-amino-6-(D-ribitylamino)uracil = 6,7-dimethyl-8-(1-D-ribityl)lumazine + phosphate + 2 H2O + H(+). It functions in the pathway cofactor biosynthesis; riboflavin biosynthesis; riboflavin from 2-hydroxy-3-oxobutyl phosphate and 5-amino-6-(D-ribitylamino)uracil: step 1/2. Its function is as follows. Catalyzes the formation of 6,7-dimethyl-8-ribityllumazine by condensation of 5-amino-6-(D-ribitylamino)uracil with 3,4-dihydroxy-2-butanone 4-phosphate. This is the penultimate step in the biosynthesis of riboflavin. In Ralstonia pickettii (strain 12J), this protein is 6,7-dimethyl-8-ribityllumazine synthase.